Reading from the N-terminus, the 592-residue chain is Aspartate--tRNA(Asp/Asn) ligase (592 aa).

Residue Glu182 coordinates L-aspartate. Residues 206 to 209 form an aspartate region; the sequence is QIFK. An L-aspartate-binding site is contributed by Arg228. Residues 228-230 and Gln237 each bind ATP; that span reads RDE. His455 provides a ligand contact to L-aspartate. Glu489 contributes to the ATP binding site. Arg496 contacts L-aspartate. Residue 541–544 participates in ATP binding; sequence GLDR.

It belongs to the class-II aminoacyl-tRNA synthetase family. Type 1 subfamily. As to quaternary structure, homodimer.

It is found in the cytoplasm. It carries out the reaction tRNA(Asx) + L-aspartate + ATP = L-aspartyl-tRNA(Asx) + AMP + diphosphate. In terms of biological role, aspartyl-tRNA synthetase with relaxed tRNA specificity since it is able to aspartylate not only its cognate tRNA(Asp) but also tRNA(Asn). Reaction proceeds in two steps: L-aspartate is first activated by ATP to form Asp-AMP and then transferred to the acceptor end of tRNA(Asp/Asn). This Thermoanaerobacter pseudethanolicus (strain ATCC 33223 / 39E) (Clostridium thermohydrosulfuricum) protein is Aspartate--tRNA(Asp/Asn) ligase.